A 1211-amino-acid chain; its full sequence is Periplasmic acid trehalase ATC1 (1211 aa).

Residues 1-46 (MKRIRSLWFNAEASYSNLNNSPSLRNKNSTGNNSRSKNYRSFSRFD) lie on the Cytoplasmic side of the membrane. The chain crosses the membrane as a helical span at residues 47–67 (LINSILLLMMLFLLAIFVTAL). The Periplasmic segment spans residues 68-1211 (YLTKSSRLTY…ATIKEIVLND (1144 aa)). A required for cell surface targeting region spans residues 70–131 (TKSSRLTYSH…NTAYYDDENM (62 aa)). N-linked (GlcNAc...) asparagine glycosylation is found at Asn-98, Asn-207, Asn-238, Asn-247, Asn-255, Asn-259, Asn-325, Asn-370, Asn-376, and Asn-488. A substrate-binding site is contributed by 513 to 514 (WD). N-linked (GlcNAc...) asparagine glycans are attached at residues Asn-539, Asn-568, Asn-628, and Asn-638. Glu-644 functions as the Proton donor in the catalytic mechanism. N-linked (GlcNAc...) asparagine glycosylation is found at Asn-696 and Asn-705. 711–712 (KQ) lines the substrate pocket. Residues Asn-879, Asn-897, Asn-910, Asn-972, Asn-990, Asn-1031, Asn-1049, Asn-1064, Asn-1147, and Asn-1157 are each glycosylated (N-linked (GlcNAc...) asparagine).

Belongs to the glycosyl hydrolase 65 family. In terms of processing, glycosylated.

The protein localises to the membrane. It localises to the vacuole lumen. It is found in the periplasm. The catalysed reaction is alpha,alpha-trehalose + H2O = alpha-D-glucose + beta-D-glucose. Functionally, periplasmic acid trehalase that catalyzes hydrolysis of the disaccharide trehalose and required for growth on trehalose as carbon source. Growth on trehalose is strictly respiratory. The polypeptide is Periplasmic acid trehalase ATC1 (Saccharomyces cerevisiae (strain CEN.PK113-7D) (Baker's yeast)).